The following is a 146-amino-acid chain: Large ribosomal subunit protein uL15 (146 aa).

The segment at 1 to 62 (MRLHELRPKT…GQMPLQERLP (62 aa)) is disordered. Over residues 10-21 (TNYKKSRKRKGR) the composition is skewed to basic residues. Positions 42 to 52 (TGGGVRPGFEG) are enriched in gly residues.

It belongs to the universal ribosomal protein uL15 family. In terms of assembly, part of the 50S ribosomal subunit.

Its function is as follows. Binds to the 23S rRNA. This is Large ribosomal subunit protein uL15 from Natranaerobius thermophilus (strain ATCC BAA-1301 / DSM 18059 / JW/NM-WN-LF).